Reading from the N-terminus, the 464-residue chain is MTDPALIDELKTLVEPGKVLTDADSLNAYGKDWTKHFAPAPSAIVFPKSIEQVQAIVRWANAHKVALVPSGGRTGLSAAAVAANGEVVVSFDYMNQILEFNEMDRTAVCQPGVVTAQLQQFAEDKGLYYPVDFASAGSSQIGGNIGTNAGGIKVIRYGMTRNWVAGMKVVTGKGDLLELNKDLIKNATGYDLRQLFIGAEGTLGFVVEATMRLERQPTNLTALVLGTPDFDSIMPVLHAFQDKLDLTAFEFFSDKALAKVLGRGDVPAPFETDCPFYALLEFEATTEERAEQALATFEHCVEQGWVLDGVMSQSEQQLQNLWKLREYISETISHWTPYKNDISVTVGKVPAFLKEIDAIVGEHYPDFEIVWFGHIGDGNLHLNILKPDAMDKDEFFGKCATVNKWVFETVQKYNGSISAEHGVGMTKRDYLEYSRSPAEIEYMKAVKAVFDPNGIMNPGKIFAA.

An FAD-binding PCMH-type domain is found at 37-216; that stretch reads FAPAPSAIVF…VEATMRLERQ (180 aa). Residues Arg325, Ser329, and Lys339 each contribute to the (R)-2-hydroxyglutarate site. (R)-malate is bound by residues Arg325, Ser329, and Lys339. The Zn(2+) site is built by His374 and His381. Asn383 provides a ligand contact to (R)-2-hydroxyglutarate. Glu420 lines the Zn(2+) pocket. A (R)-2-hydroxyglutarate-binding site is contributed by His421. Residue His421 coordinates (R)-malate.

The protein belongs to the FAD-binding oxidoreductase/transferase type 4 family. As to quaternary structure, homodimer. Requires FAD as cofactor.

It catalyses the reaction (R)-2-hydroxyglutarate + A = 2-oxoglutarate + AH2. The catalysed reaction is (R)-malate + A = oxaloacetate + AH2. Its activity is regulated as follows. Activated by Zn(2+) ions at low concentrations (10 uM) and inhibited by Zn(2+), Fe(2+) and Ni(2+) at high concentrations (10 mM). In terms of biological role, catalyzes the dehydrogenation of (R)-2-hydroxyglutarate (D-2-hydroxyglutarate or D-2-HG) to 2-oxoglutarate and of (R)-malate (D-malate) to oxaloacetate. Is functionally tied to L-serine biosynthesis, via its coupling with the D-3-phosphoglycerate dehydrogenase SerA, encoded by the adjacent gene in the locus. Is required for the utilization of D-2-hydroxyglutarate as well as D-malate as the sole carbon source for growth of P.stutzeri. Active in vitro with artificial electron acceptors such as 2,6-dichlorophenolindophenol (DCPIP) and appears to couple with electron transfer flavoprotein (ETF) for efficient oxidation of both D-2-hydroxyglutarate and D-malate in vivo. Cannot catalyze the oxidation of L-2-hydroxyglutarate, D-lactate, D-tartrate, D-2-hydroxybutanoate, D-mandelate, D-glycerate and D-phenyllactate. The sequence is that of D-2-hydroxyglutarate dehydrogenase from Stutzerimonas stutzeri (strain A1501) (Pseudomonas stutzeri).